A 435-amino-acid chain; its full sequence is Ribulose bisphosphate carboxylase large chain (435 aa).

Lys5 is subject to N6,N6,N6-trimethyllysine. Positions 114 and 164 each coordinate substrate. The Proton acceptor role is filled by Lys166. Lys168 lines the substrate pocket. Mg(2+) is bound by residues Lys192, Asp194, and Glu195. Lys192 bears the N6-carboxylysine mark. His285 functions as the Proton acceptor in the catalytic mechanism. Substrate-binding residues include Arg286, His318, and Ser370.

The protein belongs to the RuBisCO large chain family. Type I subfamily. Heterohexadecamer of 8 large chains and 8 small chains; disulfide-linked. The disulfide link is formed within the large subunit homodimers. It depends on Mg(2+) as a cofactor. In terms of processing, the disulfide bond which can form in the large chain dimeric partners within the hexadecamer appears to be associated with oxidative stress and protein turnover.

The protein resides in the plastid. It localises to the chloroplast. It catalyses the reaction 2 (2R)-3-phosphoglycerate + 2 H(+) = D-ribulose 1,5-bisphosphate + CO2 + H2O. It carries out the reaction D-ribulose 1,5-bisphosphate + O2 = 2-phosphoglycolate + (2R)-3-phosphoglycerate + 2 H(+). RuBisCO catalyzes two reactions: the carboxylation of D-ribulose 1,5-bisphosphate, the primary event in carbon dioxide fixation, as well as the oxidative fragmentation of the pentose substrate in the photorespiration process. Both reactions occur simultaneously and in competition at the same active site. The protein is Ribulose bisphosphate carboxylase large chain of Drosera burmannii (Burmese sundew).